The primary structure comprises 150 residues: Transcriptional regulator MraZ (150 aa).

SpoVT-AbrB domains are found at residues 8 to 55 (FINN…GISH) and 84 to 127 (AVQL…QPQN).

This sequence belongs to the MraZ family. As to quaternary structure, forms oligomers.

It is found in the cytoplasm. The protein localises to the nucleoid. The protein is Transcriptional regulator MraZ of Rickettsia bellii (strain OSU 85-389).